Reading from the N-terminus, the 177-residue chain is Large ribosomal subunit protein uL16 (177 aa).

It belongs to the universal ribosomal protein uL16 family. Part of the 50S ribosomal subunit. Weakly binds 5S rRNA. Probably binds the A and P site tRNAs.

This is 1 of 5 proteins that mediate the attachment of the 5S rRNA onto the large ribosomal subunit, stabilizing the orientation of adjacent RNA domains. Modeling places the A and P site tRNAs in close proximity to this protein. In Haloarcula marismortui (strain ATCC 43049 / DSM 3752 / JCM 8966 / VKM B-1809) (Halobacterium marismortui), this protein is Large ribosomal subunit protein uL16.